The following is a 173-amino-acid chain: Small ribosomal subunit protein uS5 (173 aa).

An S5 DRBM domain is found at 17–80 (LREKMIAVNR…EESRRNMIKV (64 aa)).

Belongs to the universal ribosomal protein uS5 family. Part of the 30S ribosomal subunit. Contacts proteins S4 and S8.

Its function is as follows. With S4 and S12 plays an important role in translational accuracy. In terms of biological role, located at the back of the 30S subunit body where it stabilizes the conformation of the head with respect to the body. The protein is Small ribosomal subunit protein uS5 of Delftia acidovorans (strain DSM 14801 / SPH-1).